The sequence spans 436 residues: Chaperone SurA (436 aa).

The N-terminal stretch at 1 to 30 (MKFFQRPERRLKQWGLALLLAASALLPARA) is a signal peptide. 2 PpiC domains span residues 180–281 (ETEY…KLVD) and 291–389 (VTQT…QVLE).

It is found in the periplasm. The enzyme catalyses [protein]-peptidylproline (omega=180) = [protein]-peptidylproline (omega=0). Functionally, chaperone involved in the correct folding and assembly of outer membrane proteins. Recognizes specific patterns of aromatic residues and the orientation of their side chains, which are found more frequently in integral outer membrane proteins. May act in both early periplasmic and late outer membrane-associated steps of protein maturation. This Thiobacillus denitrificans (strain ATCC 25259 / T1) protein is Chaperone SurA.